A 420-amino-acid polypeptide reads, in one-letter code: Nucleobindin-2 (420 aa).

Positions 1 to 24 (MRWRTIQARYCFLLVPCVLTALEA) are cleaved as a signal peptide. A DNA-binding region spans residues 171 to 223 (RTRHEEFKKYEMMKEHERREYLKTLSEEKRKEEEAKFAEMKRKHEDHPKVNHP). The disordered stretch occupies residues 194-225 (TLSEEKRKEEEAKFAEMKRKHEDHPKVNHPGS). The binds to necdin stretch occupies residues 213–420 (KHEDHPKVNH…AGELKFEPHT (208 aa)). EF-hand domains follow at residues 241–276 (PNDF…ELDK) and 293–328 (ERLR…KEFL). The Ca(2+) site is built by Asp-254, Asn-256, Asp-258, Glu-265, Asp-306, Asn-308, Asp-310, and Glu-317. Residues 304 to 334 (EIDNNKDRLVTLEEFLRATEKKEFLEPDSWE) carry the GBA motif. At Ser-332 the chain carries Phosphoserine. Over residues 366 to 386 (DELQKQKEELQRQHDHLEAQK) the composition is skewed to basic and acidic residues. Residues 366–420 (DELQKQKEELQRQHDHLEAQKQEYQQAVQQLEQKKFQQGIAPSGPAGELKFEPHT) are disordered. A compositionally biased stretch (low complexity) spans 387 to 396 (QEYQQAVQQL).

This sequence belongs to the nucleobindin family. Interacts (via GBA motif) with guanine nucleotide-binding protein G(i) alpha subunit GNAI3. Preferentially interacts with inactive rather than active GNAI3. Interaction with GNAI3 is inhibited when NUCB2 binds calcium, probably due to a conformational change which renders the GBA motif inaccessible. Binds to the postmitotic growth suppressor NDN; coexpression abolishes NUCB2 secretion. Interacts with MC4R.

Its subcellular location is the golgi apparatus. The protein localises to the endoplasmic reticulum. The protein resides in the nucleus envelope. It localises to the membrane. It is found in the cytoplasm. Its subcellular location is the secreted. In terms of biological role, calcium-binding protein which may have a role in calcium homeostasis. Acts as a non-receptor guanine nucleotide exchange factor which binds to and activates guanine nucleotide-binding protein (G-protein) alpha subunit GNAI3. Functionally, anorexigenic peptide, seems to play an important role in hypothalamic pathways regulating food intake and energy homeostasis, acting in a leptin-independent manner. May also exert hypertensive roles and modulate blood pressure through directly acting on peripheral arterial resistance. In intestinal epithelial cells, plays a role in the inhibition of hepatic glucose production via MC4R receptor leading to increased cyclic adenosine monophosphate (cAMP) levels and glucagon-like peptide 1 (GLP-1) secretion. The chain is Nucleobindin-2 (Nucb2) from Rattus norvegicus (Rat).